The chain runs to 386 residues: RNA polymerase sigma factor SigA (386 aa).

Positions 154 to 224 (LAEANLRLVV…TRAIADQART (71 aa)) are sigma-70 factor domain-2. The short motif at 178-181 (DLIQ) is the Interaction with polymerase core subunit RpoC element. Residues 233–309 (ETINKLIRVQ…DDVIESPVDY (77 aa)) are sigma-70 factor domain-3. Residues 322 to 375 (VMDTLTDREENVLRMRFGLDDGRMHTLEDVGKQFKVTRERIRQIEAKAIKKLRH) are sigma-70 factor domain-4. The H-T-H motif DNA-binding region spans 348 to 367 (LEDVGKQFKVTRERIRQIEA).

It belongs to the sigma-70 factor family. RpoD/SigA subfamily. As to quaternary structure, interacts transiently with the RNA polymerase catalytic core.

It is found in the cytoplasm. In terms of biological role, sigma factors are initiation factors that promote the attachment of RNA polymerase to specific initiation sites and are then released. This sigma factor is the primary sigma factor during exponential growth. The chain is RNA polymerase sigma factor SigA from Lactococcus lactis subsp. lactis (strain IL1403) (Streptococcus lactis).